The following is a 189-amino-acid chain: Potassium-transporting ATPase KdpC subunit (189 aa).

A helical membrane pass occupies residues 6–26 (PAIMMVLVFTIICGGIYPAVV).

Belongs to the KdpC family. The system is composed of three essential subunits: KdpA, KdpB and KdpC.

The protein resides in the cell inner membrane. Part of the high-affinity ATP-driven potassium transport (or Kdp) system, which catalyzes the hydrolysis of ATP coupled with the electrogenic transport of potassium into the cytoplasm. This subunit acts as a catalytic chaperone that increases the ATP-binding affinity of the ATP-hydrolyzing subunit KdpB by the formation of a transient KdpB/KdpC/ATP ternary complex. The polypeptide is Potassium-transporting ATPase KdpC subunit (Geobacter metallireducens (strain ATCC 53774 / DSM 7210 / GS-15)).